The following is a 634-amino-acid chain: Chaperone protein HtpG (634 aa).

Residues 1–343 (MTEAENRVTL…SDSLPLNVSR (343 aa)) form an a; substrate-binding region. The b stretch occupies residues 344–560 (EILQENKQLE…SYGMSRTMER (217 aa)). The tract at residues 561–634 (IMKSAGQNIP…KLNGLLQSLL (74 aa)) is c.

Belongs to the heat shock protein 90 family. In terms of assembly, homodimer.

Its subcellular location is the cytoplasm. In terms of biological role, molecular chaperone. Has ATPase activity. This is Chaperone protein HtpG from Methylococcus capsulatus (strain ATCC 33009 / NCIMB 11132 / Bath).